A 390-amino-acid chain; its full sequence is Mannitol-1-phosphate 5-dehydrogenase (390 aa).

7–18 serves as a coordination point for NAD(+); that stretch reads AVHFGGGNIGRG. Lys216 is an active-site residue.

Belongs to the mannitol dehydrogenase family. In terms of assembly, monomer.

The catalysed reaction is D-mannitol 1-phosphate + NAD(+) = beta-D-fructose 6-phosphate + NADH + H(+). Its function is as follows. Catalyzes the NAD(H)-dependent interconversion of D-fructose 6-phosphate and D-mannitol 1-phosphate in the mannitol metabolic pathway. Has a strong preference for NADH over NADPH. This chain is Mannitol-1-phosphate 5-dehydrogenase, found in Alternaria alternata (Alternaria rot fungus).